Reading from the N-terminus, the 124-residue chain is Large ribosomal subunit protein eL31 (124 aa).

Belongs to the eukaryotic ribosomal protein eL31 family. In terms of assembly, component of the large ribosomal subunit.

Its subcellular location is the cytoplasm. Component of the large ribosomal subunit. The ribosome is a large ribonucleoprotein complex responsible for the synthesis of proteins in the cell. The polypeptide is Large ribosomal subunit protein eL31 (rpl31) (Paralichthys olivaceus (Bastard halibut)).